A 433-amino-acid chain; its full sequence is MTDLTPREIVSELDRFIIGQKEAKRAVAVALRNRWRRKQLADDLRDEVYPKNILMIGPTGVGKTEISRRLARLAKAPFLKVEATKFTEVGYVGRDVDSIIRDLVDAAIVETRARMREDVKARAAKAAEDRVIEAVAGRDAREQTREMFRGKLKRGELDNTVIEIDVADTSNPMQMLDPTGQGQMGMMNLGEIFGKAFGGRTQRRKMTVAESHDILMNEEADKLLDDEVVKAAALEAVQQNGIVFIDEIDKVCARSDMRGADVSREGVQRDLLPLIEGTTVSTKYGPVKTDHILFIASGAFHIAKPSDLLPELQGRLPIRVELRALTEEDFVRILSETDNALTLQYKALMQTEKVGITFTEDGIAALASIAAEVNRSVENIGARRLYTVMERVFEELSFHAPDRSGEEVTVDAAYVEKNLGELARSSDLSRYVL.

ATP contacts are provided by residues Ile-18, 60-65 (GVGKTE), Asp-246, Glu-311, and Arg-383.

The protein belongs to the ClpX chaperone family. HslU subfamily. In terms of assembly, a double ring-shaped homohexamer of HslV is capped on each side by a ring-shaped HslU homohexamer. The assembly of the HslU/HslV complex is dependent on binding of ATP.

Its subcellular location is the cytoplasm. Functionally, ATPase subunit of a proteasome-like degradation complex; this subunit has chaperone activity. The binding of ATP and its subsequent hydrolysis by HslU are essential for unfolding of protein substrates subsequently hydrolyzed by HslV. HslU recognizes the N-terminal part of its protein substrates and unfolds these before they are guided to HslV for hydrolysis. The polypeptide is ATP-dependent protease ATPase subunit HslU (Cereibacter sphaeroides (strain KD131 / KCTC 12085) (Rhodobacter sphaeroides)).